A 446-amino-acid chain; its full sequence is tRNA modification GTPase MnmE (446 aa).

The (6S)-5-formyl-5,6,7,8-tetrahydrofolate site is built by Arg28, Glu85, and Lys124. The TrmE-type G domain maps to 220-372 (GLTVVLVGQP…LRAKLLQAAG (153 aa)). Residue Asn230 coordinates K(+). GTP contacts are provided by residues 230 to 235 (NVGKSS), 249 to 255 (TEIAGTT), and 274 to 277 (DTAG). Residue Ser234 coordinates Mg(2+). K(+)-binding residues include Thr249, Ile251, and Thr254. Thr255 is a Mg(2+) binding site. (6S)-5-formyl-5,6,7,8-tetrahydrofolate is bound at residue Lys446.

The protein belongs to the TRAFAC class TrmE-Era-EngA-EngB-Septin-like GTPase superfamily. TrmE GTPase family. Homodimer. Heterotetramer of two MnmE and two MnmG subunits. It depends on K(+) as a cofactor.

The protein localises to the cytoplasm. Exhibits a very high intrinsic GTPase hydrolysis rate. Involved in the addition of a carboxymethylaminomethyl (cmnm) group at the wobble position (U34) of certain tRNAs, forming tRNA-cmnm(5)s(2)U34. This is tRNA modification GTPase MnmE from Thiobacillus denitrificans (strain ATCC 25259 / T1).